A 194-amino-acid chain; its full sequence is Recombination protein RecR (194 aa).

The segment at 53-68 (CEICFNLDVTSPCSIC) adopts a C4-type zinc-finger fold. One can recognise a Toprim domain in the interval 76–171 (SLLCIVEELG…KVTRLACGIP (96 aa)).

Belongs to the RecR family.

Its function is as follows. May play a role in DNA repair. It seems to be involved in an RecBC-independent recombinational process of DNA repair. It may act with RecF and RecO. This Anaplasma phagocytophilum (strain HZ) protein is Recombination protein RecR.